Consider the following 329-residue polypeptide: Oxidoreductase sirO (329 aa).

Asp-54 contacts NADP(+). Tyr-59 (proton donor) is an active-site residue. A substrate-binding site is contributed by His-118. NADP(+) is bound by residues 148–149 (SN), Gln-174, 203–213 (SPLCCGLLINA), and 288–296 (SSARQLEES).

Belongs to the aldo/keto reductase family. Aldo/keto reductase 2 subfamily.

The protein operates within mycotoxin biosynthesis. Oxidoreductase; part of the gene cluster that mediates the biosynthesis of sirodesmin PL, an epipolythiodioxopiperazine (ETP) characterized by a disulfide bridged cyclic dipeptide and that acts as a phytotoxin which is involved in the blackleg didease of canola. SirD catalyzes the O-prenylation of L-tyrosine (L-Tyr) in the presence of dimethylallyl diphosphate (DMAPP) to yield 4-O-dimethylallyl-L-Tyr, and therefore represents probably the first pathway-specific enzyme in the biosynthesis of sirodesmin PL. 4-O-dimethylallyl-L-Tyr, then undergoes condensation with L-Ser in a reaction catalyzed by the non-ribosomal peptide synthase sirP to form the diketopiperazine (DKP) backbone. Further bishydroxylation of the DKP performed by the cytochrome P450 monooxygenase sirC leads to the production of the intermediate phomamide. This step is essential to form the reactive thiol group required for toxicity of sirodesmin PL. The next steps of sirodesmin biosynthesis are not well understood yet, but some predictions could be made from intermediate compounds identification. Phomamide is converted into phomalizarine via oxidation, probably by sirT. Further oxidation, methylation (by sirM or sirN) and reduction steps convert phomalizarine to deacetyl sirodesmin. Finally, acetyltransferase sirH probably acetylates deacetyl sirodesmin to produce sirodesmin PL. The polypeptide is Oxidoreductase sirO (Leptosphaeria maculans (Blackleg fungus)).